Here is a 97-residue protein sequence, read N- to C-terminus: Small nuclear ribonucleoprotein Sm D3 (97 aa).

Residues 3 to 75 (LCIKLLHETQ…IRFLIVPDML (73 aa)) form the Sm domain.

The protein belongs to the snRNP core protein family. As to quaternary structure, belongs to the 40S cdc5-associated complex (or cwf complex), a spliceosome sub-complex reminiscent of a late-stage spliceosome composed of the U2, U5 and U6 snRNAs and at least brr2, cdc5, cwf2/prp3, cwf3/syf1, cwf4/syf3, cwf5/ecm2, spp42/cwf6, cwf7/spf27, cwf8, cwf9, cwf10, cwf11, cwf12, prp45/cwf13, cwf14, cwf15, cwf16, cwf17, cwf18, cwf19, cwf20, cwf21, cwf22, cwf23, cwf24, cwf25, cwf26, cyp7/cwf27, cwf28, cwf29/ist3, lea1, msl1, prp5/cwf1, prp10, prp12/sap130, prp17, prp22, sap61, sap62, sap114, sap145, slu7, smb1, smd1, smd3, smf1, smg1 and syf2. Interacts with saf5; the interaction is direct.

The protein localises to the nucleus. Its subcellular location is the cytoplasm. It localises to the cytosol. Functionally, plays a role in pre-mRNA splicing as a core component of the spliceosomal U1, U2, U4 and U5 small nuclear ribonucleoproteins (snRNPs), the building blocks of the spliceosome. This is Small nuclear ribonucleoprotein Sm D3 (smd3) from Schizosaccharomyces pombe (strain 972 / ATCC 24843) (Fission yeast).